Here is a 447-residue protein sequence, read N- to C-terminus: C4-dicarboxylate transport protein 3 (447 aa).

A run of 8 helical transmembrane segments spans residues 5 to 27 (TLGK…GVAA), 42 to 64 (IKLI…IARM), 77 to 99 (ALVY…VNLV), 146 to 165 (LARN…GIAL), 186 to 208 (VFSI…MAFT), 223 to 245 (LMAT…VARL), 315 to 337 (IFVA…LGVL), and 352 to 374 (FITL…VLLL).

It belongs to the dicarboxylate/amino acid:cation symporter (DAACS) (TC 2.A.23) family.

Its subcellular location is the cell inner membrane. Functionally, responsible for the transport of dicarboxylates such as succinate, fumarate, and malate from the periplasm across the membrane. The chain is C4-dicarboxylate transport protein 3 (dctA3) from Ralstonia nicotianae (strain ATCC BAA-1114 / GMI1000) (Ralstonia solanacearum).